A 1191-amino-acid chain; its full sequence is Puratrophin-1 (1191 aa).

Disordered stretches follow at residues 1-152 (MERP…DPVG) and 707-728 (AGGG…SDPR). Ser64 is modified (phosphoserine). The span at 111–120 (SHLSLAQGES) shows a compositional bias: polar residues. One can recognise a DH domain in the interval 732–908 (RLQLVLAEMV…HFQLRHGNDL (177 aa)). The PH domain occupies 920 to 1027 (NLKEQGQLVR…WTADISHLLW (108 aa)). The interval 1150–1176 (SLTAEDSEISSQCPSASGSSGSDSSCV) is disordered. A compositionally biased stretch (low complexity) spans 1159 to 1176 (SSQCPSASGSSGSDSSCV).

Expressed in kidney, Leydig cells in the testis, epithelial cells in the prostate gland and Langerhans islet in the pancreas. Isoform 1 and isoform 3 are strongly expressed in Purkinje cells and to a lower extent in other neurons (at protein level). Widely expressed at low levels. More strongly expressed in testis and pancreas.

Functionally, possible role in intracellular signaling and cytoskeleton dynamics at the Golgi. The sequence is that of Puratrophin-1 (PLEKHG4) from Homo sapiens (Human).